A 343-amino-acid polypeptide reads, in one-letter code: Selenide, water dikinase (343 aa).

The active site involves U15. A non-standard amino acid (selenocysteine) is located at residue U15. ATP is bound by residues K18 and 45–47 (TAD). D48 provides a ligand contact to Mg(2+). ATP is bound by residues D65, D88, and 135–137 (GHT). D88 provides a ligand contact to Mg(2+). Residue D223 coordinates Mg(2+).

It belongs to the selenophosphate synthase 1 family. Class I subfamily. In terms of assembly, homodimer. Requires Mg(2+) as cofactor.

The enzyme catalyses hydrogenselenide + ATP + H2O = selenophosphate + AMP + phosphate + 2 H(+). In terms of biological role, synthesizes selenophosphate from selenide and ATP. This Carboxydothermus hydrogenoformans (strain ATCC BAA-161 / DSM 6008 / Z-2901) protein is Selenide, water dikinase.